A 62-amino-acid chain; its full sequence is Short neurotoxin A (62 aa).

The segment covering 1 to 16 (RRCFNHPSSQPQTNKS) has biased composition (polar residues). The interval 1-21 (RRCFNHPSSQPQTNKSCPPGE) is disordered. 4 cysteine pairs are disulfide-bonded: Cys3-Cys24, Cys17-Cys41, Cys43-Cys54, and Cys55-Cys60.

The protein belongs to the three-finger toxin family. Short-chain subfamily. Type I alpha-neurotoxin sub-subfamily. In terms of tissue distribution, expressed by the venom gland.

Its subcellular location is the secreted. Binds to muscle nicotinic acetylcholine receptor (nAChR) and inhibit acetylcholine from binding to the receptor, thereby impairing neuromuscular transmission. The polypeptide is Short neurotoxin A (Laticauda crockeri (Crocker's sea snake)).